The primary structure comprises 780 residues: E3 UFM1-protein ligase 1 homolog (780 aa).

Over residues 403–413 the composition is skewed to polar residues; that stretch reads STSSTNPNHST. 2 disordered regions span residues 403–458 and 734–760; these read STSS…RSHI and SSDKQKPEMSEEPKDSDNSNDNQNIDL. 2 stretches are compositionally biased toward basic and acidic residues: residues 443–458 and 736–750; these read KDRSTPDDLESTRSHI and DKQKPEMSEEPKDSD.

Belongs to the UFL1 family.

Functionally, E3 UFM1-protein ligase that mediates ufmylation of target proteins. In Trichoplax adhaerens (Trichoplax reptans), this protein is E3 UFM1-protein ligase 1 homolog.